The primary structure comprises 351 residues: Modulator of apoptosis 1 (351 aa).

Positions 49 to 52 match the LIR motif; it reads YRLL. The interval 120-127 is BH3-like; that stretch reads LTRALAHE. Residues 202-205 are RASSF1-binding; the sequence is KRRR.

It belongs to the PNMA family. Homodimer. Under normal circumstances, held in an inactive conformation by an intramolecular interaction. Interacts with BAX. Binding to RASSF1 isoform A (RASSF1A) relieves this inhibitory interaction and allows further binding to BAX. Also binds to BCL2 and BCLX. Recruited to the TNFRSF1A and TNFRSF10A complexes in response to their respective cognate ligand, after internalization. Interacts with TRIM39. Interacts with RASSF6. Interacts with ATG8 proteins MAP1LC3A, MAP1LC3B and MAP1LC3C. Does not interact with ATG8 proteins GABARAPL1, GABARAPL2 and GABARAP. Interacts with SQSTM1; promoting dissociation of SQSTM1 inclusion bodies that sequester KEAP1. In terms of processing, ubiquitinated and degraded during mitotic exit by APC/C-Cdh1, this modification is inhibited by TRIM39.

It is found in the cytoplasm. The protein localises to the cytosol. It localises to the mitochondrion outer membrane. Its subcellular location is the extracellular vesicle membrane. Retrotransposon-derived protein that forms virion-like capsids. Acts as an effector of BAX during apoptosis: enriched at outer mitochondria membrane and associates with BAX upon induction of apoptosis, facilitating BAX-dependent mitochondrial outer membrane permeabilization and apoptosis. Required for death receptor-dependent apoptosis. When associated with RASSF1, promotes BAX conformational change and translocation to mitochondrial membranes in response to TNF and TNFSF10 stimulation. Also promotes autophagy: promotes phagophore closure via association with ATG8 proteins. Acts as an inhibitor of the NFE2L2/NRF2 pathway via interaction with SQSTM1: interaction promotes dissociation of SQSTM1 inclusion bodies that sequester KEAP1, relieving inactivation of the BCR(KEAP1) complex. In Macaca fascicularis (Crab-eating macaque), this protein is Modulator of apoptosis 1.